Reading from the N-terminus, the 860-residue chain is Probable inorganic carbon transporter subunit DabA (860 aa).

The interval 1 to 32 is disordered; that stretch reads MTTTSLGADAAHTHAMVPSAIPPEGSDAAGPD. Zn(2+)-binding residues include C369, D371, H551, and C566.

This sequence belongs to the inorganic carbon transporter (TC 9.A.2) DabA family. As to quaternary structure, forms a complex with DabB. The cofactor is Zn(2+).

The protein localises to the cell inner membrane. Functionally, part of an energy-coupled inorganic carbon pump. In Ralstonia pickettii (strain 12D), this protein is Probable inorganic carbon transporter subunit DabA.